A 324-amino-acid polypeptide reads, in one-letter code: Viral cathepsin (324 aa).

Positions 1–16 are cleaved as a signal peptide; sequence MNKIVLYLLVYGATLG. A propeptide spans 17–113 (activation peptide); the sequence is AAYDLLKAPS…VVLDRPPDKG (97 aa). Disulfide bonds link C134–C175, C168–C208, and C263–C311. The active site involves C137. N-linked (GlcNAc...) asparagine; by host glycosylation occurs at N159. Active-site residues include H270 and N290.

This sequence belongs to the peptidase C1 family. In terms of processing, synthesized as an inactive proenzyme and activated by proteolytic removal of the inhibitory propeptide.

The catalysed reaction is Endopeptidase of broad specificity, hydrolyzing substrates of both cathepsin L and cathepsin B.. Functionally, cysteine protease that plays an essential role in host liquefaction to facilitate horizontal transmission of the virus. May participate in the degradation of foreign protein expressed by the baculovirus system. This Antheraea pernyi nuclear polyhedrosis virus (ApNPV) protein is Viral cathepsin (VCATH).